A 211-amino-acid polypeptide reads, in one-letter code: Adenylate kinase (211 aa).

Residue Gly-10–Thr-15 coordinates ATP. The tract at residues Ser-30–Val-59 is NMP. AMP-binding positions include Thr-31, Arg-36, Glu-57–Val-59, Gly-85–Arg-88, and Gln-92. The segment at Gly-121–Asp-158 is LID. Arg-122 contacts ATP. Zn(2+) is bound by residues Cys-125 and Cys-128. Ile-131–Phe-132 contacts ATP. Residues Cys-145 and Cys-148 each contribute to the Zn(2+) site. AMP-binding residues include Arg-155 and Arg-166. Val-194 contacts ATP.

Belongs to the adenylate kinase family. Monomer.

The protein localises to the cytoplasm. It carries out the reaction AMP + ATP = 2 ADP. Its pathway is purine metabolism; AMP biosynthesis via salvage pathway; AMP from ADP: step 1/1. Functionally, catalyzes the reversible transfer of the terminal phosphate group between ATP and AMP. Plays an important role in cellular energy homeostasis and in adenine nucleotide metabolism. The protein is Adenylate kinase of Borrelia garinii subsp. bavariensis (strain ATCC BAA-2496 / DSM 23469 / PBi) (Borreliella bavariensis).